A 500-amino-acid chain; its full sequence is Probable malate:quinone oxidoreductase (500 aa).

This sequence belongs to the MQO family. Requires FAD as cofactor.

The catalysed reaction is (S)-malate + a quinone = a quinol + oxaloacetate. Its pathway is carbohydrate metabolism; tricarboxylic acid cycle; oxaloacetate from (S)-malate (quinone route): step 1/1. The sequence is that of Probable malate:quinone oxidoreductase from Bacillus anthracis (strain A0248).